Reading from the N-terminus, the 729-residue chain is Fatty acid oxidation complex subunit alpha (729 aa).

The tract at residues 1 to 189 (MLYKGDTLYL…KIGLVDGVVK (189 aa)) is enoyl-CoA hydratase/isomerase. A substrate-binding site is contributed by D296. Residues 311-729 (ETPKQAAVLG…ARPVGSLKTA (419 aa)) are 3-hydroxyacyl-CoA dehydrogenase. NAD(+)-binding positions include M324, D343, 400 to 402 (VVE), K407, and S429. H450 functions as the For 3-hydroxyacyl-CoA dehydrogenase activity in the catalytic mechanism. Residue N453 coordinates NAD(+). 2 residues coordinate substrate: N500 and Y660. The disordered stretch occupies residues 708-729 (RHNEPYYPPVEPARPVGSLKTA).

In the N-terminal section; belongs to the enoyl-CoA hydratase/isomerase family. It in the C-terminal section; belongs to the 3-hydroxyacyl-CoA dehydrogenase family. As to quaternary structure, heterotetramer of two alpha chains (FadB) and two beta chains (FadA).

It carries out the reaction a (3S)-3-hydroxyacyl-CoA + NAD(+) = a 3-oxoacyl-CoA + NADH + H(+). It catalyses the reaction a (3S)-3-hydroxyacyl-CoA = a (2E)-enoyl-CoA + H2O. The catalysed reaction is a 4-saturated-(3S)-3-hydroxyacyl-CoA = a (3E)-enoyl-CoA + H2O. The enzyme catalyses (3S)-3-hydroxybutanoyl-CoA = (3R)-3-hydroxybutanoyl-CoA. It carries out the reaction a (3Z)-enoyl-CoA = a 4-saturated (2E)-enoyl-CoA. It catalyses the reaction a (3E)-enoyl-CoA = a 4-saturated (2E)-enoyl-CoA. It functions in the pathway lipid metabolism; fatty acid beta-oxidation. Functionally, involved in the aerobic and anaerobic degradation of long-chain fatty acids via beta-oxidation cycle. Catalyzes the formation of 3-oxoacyl-CoA from enoyl-CoA via L-3-hydroxyacyl-CoA. It can also use D-3-hydroxyacyl-CoA and cis-3-enoyl-CoA as substrate. This Salmonella choleraesuis (strain SC-B67) protein is Fatty acid oxidation complex subunit alpha.